The following is a 519-amino-acid chain: MVAIIPHASFTTIKLTQKTEGSQMPTEEICKINMRTRKFDVGGNSRDFECFYSNFVQTVILLGTFFYCVERLQPWSIVTADISYKQIFVNVFVVCLIMVGLIFTKYWQHGYKSLPKFDTIYSLYLPFMVSLLFDTSSTVINTILILSVLNSYRWRTQLVVIILQLCLIFFNFEAGDRLKNIISIVINSLLSLILKYIGQLKSLDNIDSNLFSILLTNILYVSEAGTVHFRILKGIILALTTIISINYVLKKVMHFKPFMLSISFAIGLPLFANTFIHLEDGENPLLWLVKYILESTIRQKILFAWSSILILSIPSILIEKDSLSLNTSRKLWHFIIFLLIIPSFQMDSNFVKIALSGTIPVFLSIEYIRFQNLPPLGSAIELQLRRFADDRDHSGPLIISYLYLLFGISTPLLMNNSPMGLIGLGIGDSLASIIGKRYGRIRWKGTQKTLEGTLAFIVTSFIVCLVLLRFDKAAIFNHLTTLQLLTLCTLSGVLEGNSVLNDNILIPAFMMICEKLITL.

Residues methionine 1 to aspartate 47 are Cytoplasmic-facing. The chain crosses the membrane as a helical span at residues phenylalanine 48–cysteine 68. Topologically, residues valine 69 to phenylalanine 88 are lumenal. The helical transmembrane segment at valine 89–histidine 109 threads the bilayer. Topologically, residues glycine 110–aspartate 118 are cytoplasmic. Residues threonine 119–valine 139 form a helical membrane-spanning segment. Residues isoleucine 140–serine 151 are Lumenal-facing. A helical transmembrane segment spans residues tyrosine 152–phenylalanine 172. The Cytoplasmic segment spans residues glutamate 173 to isoleucine 181. Residues isoleucine 182 to leucine 203 traverse the membrane as a helical segment. Residues aspartate 204–glutamate 223 are Lumenal-facing. Residues alanine 224–serine 244 form a helical membrane-spanning segment. The Cytoplasmic segment spans residues isoleucine 245–methionine 253. Residues histidine 254–threonine 274 traverse the membrane as a helical segment. Residues phenylalanine 275 to glutamate 294 are Lumenal-facing. The helical transmembrane segment at serine 295–serine 315 threads the bilayer. Over isoleucine 316 to asparagine 326 the chain is Cytoplasmic. The helical transmembrane segment at threonine 327–aspartate 347 threads the bilayer. Topologically, residues serine 348–asparagine 349 are lumenal. The chain crosses the membrane as a helical span at residues phenylalanine 350–phenylalanine 370. Topologically, residues glutamine 371–serine 394 are cytoplasmic. A helical membrane pass occupies residues glycine 395–asparagine 415. Topologically, residues asparagine 416–serine 417 are lumenal. A helical transmembrane segment spans residues proline 418 to tyrosine 438. At glycine 439 to threonine 449 the chain is on the cytoplasmic side. Residues leucine 450 to phenylalanine 470 form a helical membrane-spanning segment. Over aspartate 471–lysine 472 the chain is Lumenal. Residues alanine 473 to valine 493 form a helical membrane-spanning segment. At leucine 494 to leucine 519 the chain is on the cytoplasmic side.

The protein belongs to the polyprenol kinase family.

It localises to the endoplasmic reticulum membrane. It catalyses the reaction a di-trans,poly-cis-dolichol + CTP = a di-trans,poly-cis-dolichyl phosphate + CDP + H(+). It functions in the pathway protein modification; protein glycosylation. Catalyzes CTP-mediated phosphorylation of dolichol, the terminal step in de novo dolichyl monophosphate (Dol-P) biosynthesis. Dol-P is a lipid carrier essential for the synthesis of N-linked and O-linked oligosaccharides and for GPI anchors. This Saccharomyces cerevisiae (strain ATCC 204508 / S288c) (Baker's yeast) protein is Dolichol kinase (SEC59).